The primary structure comprises 248 residues: Large ribosomal subunit protein uL4 (248 aa).

The interval 44 to 109 is disordered; it reads QDTGTDEYAG…LDINTKERKL (66 aa). Residues 92 to 109 are compositionally biased toward basic and acidic residues; it reads PKAEKDRGLDINTKERKL.

The protein belongs to the universal ribosomal protein uL4 family. As to quaternary structure, part of the 50S ribosomal subunit.

Functionally, one of the primary rRNA binding proteins, this protein initially binds near the 5'-end of the 23S rRNA. It is important during the early stages of 50S assembly. It makes multiple contacts with different domains of the 23S rRNA in the assembled 50S subunit and ribosome. Its function is as follows. Forms part of the polypeptide exit tunnel. This is Large ribosomal subunit protein uL4 from Natronomonas pharaonis (strain ATCC 35678 / DSM 2160 / CIP 103997 / JCM 8858 / NBRC 14720 / NCIMB 2260 / Gabara) (Halobacterium pharaonis).